The chain runs to 680 residues: NADPH--cytochrome P450 reductase (680 aa).

The Lumenal portion of the chain corresponds to 1-5 (MALDK). The chain crosses the membrane as a helical span at residues 6-23 (LDLYVIITLVVAIAAYFA). At 24–680 (KNQFLDQQQD…VQNRYQEDVW (657 aa)) the chain is on the cytoplasmic side. The Flavodoxin-like domain occupies 60–204 (TLLLFGSQTG…DFLAWKDNVF (145 aa)). FMN contacts are provided by residues 66–71 (SQTGTA), 117–120 (ATYG), 152–161 (LGNSTYEFFN), and Asp187. The FAD-binding FR-type domain maps to 264 to 509 (THPFLARIVK…NGPRGKFSKF (246 aa)). An NADP(+)-binding site is contributed by Arg283. Residues 439–442 (RYYS), 457–459 (TAV), and 473–476 (GVVT) contribute to the FAD site. NADP(+) is bound by residues Thr537, 599–600 (SR), 606–610 (KVYVQ), and Asp642. Trp680 serves as a coordination point for FAD.

Belongs to the NADPH--cytochrome P450 reductase family. It in the N-terminal section; belongs to the flavodoxin family. This sequence in the C-terminal section; belongs to the flavoprotein pyridine nucleotide cytochrome reductase family. FAD serves as cofactor. FMN is required as a cofactor.

The protein localises to the endoplasmic reticulum membrane. It is found in the mitochondrion outer membrane. Its subcellular location is the cell membrane. The catalysed reaction is 2 oxidized [cytochrome P450] + NADPH = 2 reduced [cytochrome P450] + NADP(+) + H(+). In terms of biological role, this enzyme is required for electron transfer from NADP to cytochrome P450 in microsomes. It can also provide electron transfer to heme oxygenase and cytochrome B5. Involved in ergosterol biosynthesis. The protein is NADPH--cytochrome P450 reductase of Candida tropicalis (Yeast).